A 189-amino-acid chain; its full sequence is Peptidyl-tRNA hydrolase (189 aa).

Tyr-14 is a binding site for tRNA. Catalysis depends on His-19, which acts as the Proton acceptor. Residues Phe-61, Asn-63, and Asn-109 each coordinate tRNA.

This sequence belongs to the PTH family. As to quaternary structure, monomer.

It is found in the cytoplasm. It catalyses the reaction an N-acyl-L-alpha-aminoacyl-tRNA + H2O = an N-acyl-L-amino acid + a tRNA + H(+). In terms of biological role, hydrolyzes ribosome-free peptidyl-tRNAs (with 1 or more amino acids incorporated), which drop off the ribosome during protein synthesis, or as a result of ribosome stalling. Its function is as follows. Catalyzes the release of premature peptidyl moieties from peptidyl-tRNA molecules trapped in stalled 50S ribosomal subunits, and thus maintains levels of free tRNAs and 50S ribosomes. The sequence is that of Peptidyl-tRNA hydrolase from Sulfurovum sp. (strain NBC37-1).